The following is a 417-amino-acid chain: UPF0597 protein FMG_0209 (417 aa).

It belongs to the UPF0597 family.

The sequence is that of UPF0597 protein FMG_0209 from Finegoldia magna (strain ATCC 29328 / DSM 20472 / WAL 2508) (Peptostreptococcus magnus).